The following is a 220-amino-acid chain: Inner membrane-spanning protein YciB (220 aa).

6 helical membrane passes run 20–40, 57–77, 86–106, 123–143, 156–176, and 187–207; these read EVPP…FFFA, IGAP…IALA, LPIM…LTLW, LFGA…GYVF, KLTL…EVVW, and FKVW…MPLI.

The protein belongs to the YciB family.

It localises to the cell inner membrane. In terms of biological role, plays a role in cell envelope biogenesis, maintenance of cell envelope integrity and membrane homeostasis. The chain is Inner membrane-spanning protein YciB from Brucella anthropi (strain ATCC 49188 / DSM 6882 / CCUG 24695 / JCM 21032 / LMG 3331 / NBRC 15819 / NCTC 12168 / Alc 37) (Ochrobactrum anthropi).